A 447-amino-acid polypeptide reads, in one-letter code: Alpha-1,3-mannosyl-glycoprotein 2-beta-N-acetylglucosaminyltransferase (447 aa).

The Cytoplasmic segment spans residues 1-6 (MLKKQS). Residues 7–29 (AGLVLWGAILFVAWNALLLLFFW) traverse the membrane as a helical; Signal-anchor for type II membrane protein segment. The Lumenal portion of the chain corresponds to 30–447 (TRPVPSRLPS…TWDGYDPSWT (418 aa)). Cysteines 115 and 145 form a disulfide. Positions 117, 144, 190, and 212 each coordinate substrate. Residue aspartate 213 participates in Mn(2+) binding. Cysteine 239 and cysteine 305 form a disulfide bridge. Catalysis depends on aspartate 291, which acts as the Proton acceptor. Serine 322 provides a ligand contact to substrate.

Belongs to the glycosyltransferase 13 family. In terms of assembly, interacts with MGAT4D. Interacts with BRI3. The cofactor is Mn(2+).

It localises to the golgi apparatus membrane. Its subcellular location is the cytoplasm. It is found in the perinuclear region. It carries out the reaction N(4)-(alpha-D-Man-(1-&gt;3)-[alpha-D-Man-(1-&gt;3)-[alpha-D-Man-(1-&gt;6)]-alpha-D-Man-(1-&gt;6)]-beta-D-Man-(1-&gt;4)-beta-D-GlcNAc-(1-&gt;4)-beta-D-GlcNAc)-L-asparaginyl-[protein] (N-glucan mannose isomer 5A1,2) + UDP-N-acetyl-alpha-D-glucosamine = N(4)-{beta-D-GlcNAc-(1-&gt;2)-alpha-D-Man-(1-&gt;3)-[alpha-D-Man-(1-&gt;3)-[alpha-D-Man-(1-&gt;6)]-alpha-D-Man-(1-&gt;6)]-beta-D-Man-(1-&gt;4)-beta-D-GlcNAc-(1-&gt;4)-beta-D-GlcNAc}-L-asparaginyl-[protein] + UDP + H(+). Its pathway is protein modification; protein glycosylation. Initiates complex N-linked carbohydrate formation. Essential for the conversion of high-mannose to hybrid and complex N-glycans. In Oryctolagus cuniculus (Rabbit), this protein is Alpha-1,3-mannosyl-glycoprotein 2-beta-N-acetylglucosaminyltransferase (MGAT1).